The sequence spans 186 residues: dCTP deaminase (186 aa).

DCTP is bound at residue 107–112 (KSTYAR). Residue Glu133 is the Proton donor/acceptor of the active site. Gln152, Tyr166, and Gln176 together coordinate dCTP.

This sequence belongs to the dCTP deaminase family. As to quaternary structure, homotrimer.

It catalyses the reaction dCTP + H2O + H(+) = dUTP + NH4(+). The protein operates within pyrimidine metabolism; dUMP biosynthesis; dUMP from dCTP (dUTP route): step 1/2. Its function is as follows. Catalyzes the deamination of dCTP to dUTP. The protein is dCTP deaminase of Campylobacter concisus (strain 13826).